We begin with the raw amino-acid sequence, 199 residues long: MAPKAVLVGLPGAGKSTIGRRLSKALGVSLLDTDAAIEKQTGRSIADIFAIDGEEEFRRIEEGVVRAALVEHDGVVSLGGGAVTSPGVCAALAGHIVIYLEINAEEAMRRACGSTVRPLLAGPDRAEKFQDLMARRVPLYRRVATIRVDTNCHNLGAVVRYIMARLQAQLATPVSGGDRKSSEAERSGAPLRKSSEVVK.

An ATP-binding site is contributed by glycine 12–threonine 17. Serine 16 lines the Mg(2+) pocket. Residues aspartate 34, arginine 58, and glycine 80 each contribute to the substrate site. Arginine 117 is a binding site for ATP. Arginine 136 provides a ligand contact to substrate. A disordered region spans residues valine 174 to lysine 199. Positions glycine 177–arginine 186 are enriched in basic and acidic residues.

The protein belongs to the shikimate kinase family. As to quaternary structure, monomer. Mg(2+) is required as a cofactor.

Its subcellular location is the cytoplasm. The enzyme catalyses shikimate + ATP = 3-phosphoshikimate + ADP + H(+). It functions in the pathway metabolic intermediate biosynthesis; chorismate biosynthesis; chorismate from D-erythrose 4-phosphate and phosphoenolpyruvate: step 5/7. Its function is as follows. Catalyzes the specific phosphorylation of the 3-hydroxyl group of shikimic acid using ATP as a cosubstrate. This is Shikimate kinase from Mycobacterium leprae (strain TN).